Consider the following 396-residue polypeptide: Ribosomal RNA large subunit methyltransferase I (396 aa).

Residues 2–79 form the PUA domain; the sequence is AIRIKLKPGR…REEEIDREFF (78 aa).

It belongs to the methyltransferase superfamily. RlmI family.

The protein localises to the cytoplasm. It carries out the reaction cytidine(1962) in 23S rRNA + S-adenosyl-L-methionine = 5-methylcytidine(1962) in 23S rRNA + S-adenosyl-L-homocysteine + H(+). Specifically methylates the cytosine at position 1962 (m5C1962) of 23S rRNA. The chain is Ribosomal RNA large subunit methyltransferase I from Shewanella baltica (strain OS155 / ATCC BAA-1091).